We begin with the raw amino-acid sequence, 557 residues long: uncharacterized protein (557 aa).

The segment at 17 to 38 (NSAEFSIHSTSNPTNPEEPNIT) is disordered. A run of 9 helical transmembrane segments spans residues 60–80 (LSLFSVFSVSFSLLGLLPSVA), 94–114 (GLLWGWLIAMVFIICIALSMA), 214–234 (SVGTYLNTLFLFISMIVILAM), 261–281 (FAILMSFCGVIWTMSGYDAPF), 297–317 (GIILTAAIGGIMGWVMQIVIA), 348–368 (LGILSLTIVSSFLMGQSNLIA), 407–427 (VIGVLILFLAFAGAITIGAVF), 468–488 (IGFCSVSFVALMIPILCFPSV), and 498–518 (WTCLVFGAPMLAVLIWYAISG).

Belongs to the amino acid-polyamine-organocation (APC) superfamily.

It is found in the membrane. This is an uncharacterized protein from Schizosaccharomyces pombe (strain 972 / ATCC 24843) (Fission yeast).